Consider the following 137-residue polypeptide: S-protein homolog 16 (137 aa).

The first 21 residues, 1–21 (MKNLLVFIFVFSLCMFDHVSG), serve as a signal peptide directing secretion. N-linked (GlcNAc...) asparagine glycosylation occurs at Asn-87.

It belongs to the plant self-incompatibility (S1) protein family.

The protein resides in the secreted. The polypeptide is S-protein homolog 16 (Arabidopsis thaliana (Mouse-ear cress)).